Here is a 304-residue protein sequence, read N- to C-terminus: UDP-N-acetylenolpyruvoylglucosamine reductase (304 aa).

The FAD-binding PCMH-type domain maps to 33-198 (RVGGPVDILL…ITATFCFESG (166 aa)). Arginine 177 is an active-site residue. The Proton donor role is filled by serine 227. Glutamate 297 is a catalytic residue.

This sequence belongs to the MurB family. FAD is required as a cofactor.

Its subcellular location is the cytoplasm. The catalysed reaction is UDP-N-acetyl-alpha-D-muramate + NADP(+) = UDP-N-acetyl-3-O-(1-carboxyvinyl)-alpha-D-glucosamine + NADPH + H(+). It functions in the pathway cell wall biogenesis; peptidoglycan biosynthesis. Functionally, cell wall formation. In Clostridium botulinum (strain Alaska E43 / Type E3), this protein is UDP-N-acetylenolpyruvoylglucosamine reductase.